The following is a 663-amino-acid chain: Methionine--tRNA ligase (663 aa).

The 'HIGH' region signature appears at 10-20 (AYTNGPLHLGH). Zn(2+)-binding residues include cysteine 142, cysteine 145, cysteine 154, and cysteine 157. The 'KMSKS' region signature appears at 323–327 (KMSTS). ATP is bound at residue threonine 326. The region spanning 563–663 (YFGNIDLRVG…RDLPVGSKIH (101 aa)) is the tRNA-binding domain.

It belongs to the class-I aminoacyl-tRNA synthetase family. MetG type 1 subfamily. As to quaternary structure, homodimer. It depends on Zn(2+) as a cofactor.

The protein localises to the cytoplasm. The enzyme catalyses tRNA(Met) + L-methionine + ATP = L-methionyl-tRNA(Met) + AMP + diphosphate. Its function is as follows. Is required not only for elongation of protein synthesis but also for the initiation of all mRNA translation through initiator tRNA(fMet) aminoacylation. The polypeptide is Methionine--tRNA ligase (Methanococcus maripaludis (strain C5 / ATCC BAA-1333)).